A 364-amino-acid polypeptide reads, in one-letter code: tRNA 2-selenouridine synthase (364 aa).

A Rhodanese domain is found at Leu-14–Ile-137. Catalysis depends on Cys-97, which acts as the S-selanylcysteine intermediate.

The protein belongs to the SelU family. Monomer.

It carries out the reaction 5-methylaminomethyl-2-thiouridine(34) in tRNA + selenophosphate + (2E)-geranyl diphosphate + H2O + H(+) = 5-methylaminomethyl-2-selenouridine(34) in tRNA + (2E)-thiogeraniol + phosphate + diphosphate. It catalyses the reaction 5-methylaminomethyl-2-thiouridine(34) in tRNA + (2E)-geranyl diphosphate = 5-methylaminomethyl-S-(2E)-geranyl-thiouridine(34) in tRNA + diphosphate. The catalysed reaction is 5-methylaminomethyl-S-(2E)-geranyl-thiouridine(34) in tRNA + selenophosphate + H(+) = 5-methylaminomethyl-2-(Se-phospho)selenouridine(34) in tRNA + (2E)-thiogeraniol. The enzyme catalyses 5-methylaminomethyl-2-(Se-phospho)selenouridine(34) in tRNA + H2O = 5-methylaminomethyl-2-selenouridine(34) in tRNA + phosphate. Functionally, involved in the post-transcriptional modification of the uridine at the wobble position (U34) of tRNA(Lys), tRNA(Glu) and tRNA(Gln). Catalyzes the conversion of 2-thiouridine (S2U-RNA) to 2-selenouridine (Se2U-RNA). Acts in a two-step process involving geranylation of 2-thiouridine (S2U) to S-geranyl-2-thiouridine (geS2U) and subsequent selenation of the latter derivative to 2-selenouridine (Se2U) in the tRNA chain. The protein is tRNA 2-selenouridine synthase of Shigella dysenteriae serotype 1 (strain Sd197).